The chain runs to 195 residues: Interferon tau (195 aa).

The first 23 residues, 1 to 23, serve as a signal peptide directing secretion; sequence MAFVLSLRMALVLVSYCPGGSLG. Disulfide bonds link Cys24–Cys122 and Cys52–Cys162. N-linked (GlcNAc...) asparagine glycosylation is present at Asn101.

The protein belongs to the alpha/beta interferon family. IFN-alphaII subfamily. In terms of tissue distribution, constitutively and exclusively expressed in the mononuclear cells of the extraembryonic trophectoderm.

The protein localises to the secreted. In terms of biological role, paracrine hormone primarily responsible for maternal recognition of pregnancy. Interacts with endometrial receptors, probably type I interferon receptors, and blocks estrogen receptor expression, preventing the estrogen-induced increase in oxytocin receptor expression in the endometrium. This results in the suppression of the pulsatile endometrial release of the luteolytic hormone prostaglandin F2-alpha, hindering the regression of the corpus luteum (luteolysis) and therefore a return to ovarian cyclicity. This, and a possible direct effect of IFN-tau on prostaglandin synthesis, leads in turn to continued ovarian progesterone secretion, which stimulates the secretion by the endometrium of the nutrients required for the growth of the conceptus. In summary, displays particularly high antiviral and antiproliferative potency concurrently with particular weak cytotoxicity, high antiluteolytic activity and immunomodulatory properties. In contrast with other IFNs, IFN-tau is not virally inducible. In Ovibos moschatus (Muskox), this protein is Interferon tau (IFNT).